Reading from the N-terminus, the 20-residue chain is Ferric reductase A (20 aa).

As to quaternary structure, monomer.

The enzyme catalyses 2 a Fe(II)-siderophore + NAD(+) + H(+) = 2 a Fe(III)-siderophore + NADH. Reductase activity that acts on Fe(3+)-chelates and NADH as an electron donor and requires the presence of FMN for full activity. May play a role in iron uptake. In Paracoccus denitrificans, this protein is Ferric reductase A (ferA).